The primary structure comprises 324 residues: Mevalonate kinase (324 aa).

103 to 113 (PPRAGLGSSAA) contacts ATP. The active-site Proton acceptor is Asp-154.

The protein belongs to the GHMP kinase family. Mevalonate kinase subfamily. In terms of assembly, homodimer. Mg(2+) serves as cofactor.

It is found in the cytoplasm. The catalysed reaction is (R)-mevalonate + ATP = (R)-5-phosphomevalonate + ADP + H(+). It functions in the pathway isoprenoid biosynthesis; isopentenyl diphosphate biosynthesis via mevalonate pathway; isopentenyl diphosphate from (R)-mevalonate: step 1/3. Its function is as follows. Catalyzes the phosphorylation of (R)-mevalonate (MVA) to (R)-mevalonate 5-phosphate (MVAP). Functions in the mevalonate (MVA) pathway leading to isopentenyl diphosphate (IPP), a key precursor for the biosynthesis of isoprenoid compounds such as archaeal membrane lipids. The sequence is that of Mevalonate kinase from Aeropyrum pernix (strain ATCC 700893 / DSM 11879 / JCM 9820 / NBRC 100138 / K1).